Here is a 499-residue protein sequence, read N- to C-terminus: Serine/threonine-protein kinase RHS3 (499 aa).

The segment at 1–92 (MLLKPGNKLV…NSSKPHTGGD (92 aa)) is disordered. A compositionally biased stretch (basic and acidic residues) spans 39-55 (QKQVEQNTKKIEEHQIK). Positions 63–85 (SNHNVNMSSQSNNSESTSTNNSS) are enriched in low complexity. In terms of domain architecture, Protein kinase spans 113 to 436 (FRVLKRLGYG…ATEIKQHPFF (324 aa)). ATP is bound by residues 119-127 (LGYGDIGSV) and Lys144. Asp240 serves as the catalytic Proton acceptor. Positions 437 to 499 (EGVNWALIRG…DPDYIVFEYF (63 aa)) constitute an AGC-kinase C-terminal domain.

Belongs to the protein kinase superfamily. AGC Ser/Thr protein kinase family. As to quaternary structure, interacts with PDPK1/PDK1. Autophosphorylated and phosphorylated by PDPK1/PDK1. Specifically expressed in root hair cells.

The catalysed reaction is L-seryl-[protein] + ATP = O-phospho-L-seryl-[protein] + ADP + H(+). The enzyme catalyses L-threonyl-[protein] + ATP = O-phospho-L-threonyl-[protein] + ADP + H(+). Its activity is regulated as follows. Activated by PDPK1/PDK1. Involved in root hair growth and morphogenesis. The sequence is that of Serine/threonine-protein kinase RHS3 from Arabidopsis thaliana (Mouse-ear cress).